We begin with the raw amino-acid sequence, 443 residues long: Probable glycine dehydrogenase (decarboxylating) subunit 1 (443 aa).

The protein belongs to the GcvP family. N-terminal subunit subfamily. In terms of assembly, the glycine cleavage system is composed of four proteins: P, T, L and H. In this organism, the P 'protein' is a heterodimer of two subunits.

The catalysed reaction is N(6)-[(R)-lipoyl]-L-lysyl-[glycine-cleavage complex H protein] + glycine + H(+) = N(6)-[(R)-S(8)-aminomethyldihydrolipoyl]-L-lysyl-[glycine-cleavage complex H protein] + CO2. The glycine cleavage system catalyzes the degradation of glycine. The P protein binds the alpha-amino group of glycine through its pyridoxal phosphate cofactor; CO(2) is released and the remaining methylamine moiety is then transferred to the lipoamide cofactor of the H protein. This is Probable glycine dehydrogenase (decarboxylating) subunit 1 from Koribacter versatilis (strain Ellin345).